A 125-amino-acid polypeptide reads, in one-letter code: Large ribosomal subunit protein bL19 (125 aa).

This sequence belongs to the bacterial ribosomal protein bL19 family.

Functionally, this protein is located at the 30S-50S ribosomal subunit interface and may play a role in the structure and function of the aminoacyl-tRNA binding site. In Wolbachia pipientis subsp. Culex pipiens (strain wPip), this protein is Large ribosomal subunit protein bL19.